We begin with the raw amino-acid sequence, 502 residues long: Probable cytosol aminopeptidase (502 aa).

The Mn(2+) site is built by lysine 269 and aspartate 274. Residue lysine 281 is part of the active site. 3 residues coordinate Mn(2+): aspartate 292, aspartate 351, and glutamate 353. Residue arginine 355 is part of the active site.

The protein belongs to the peptidase M17 family. Requires Mn(2+) as cofactor.

The protein resides in the cytoplasm. It catalyses the reaction Release of an N-terminal amino acid, Xaa-|-Yaa-, in which Xaa is preferably Leu, but may be other amino acids including Pro although not Arg or Lys, and Yaa may be Pro. Amino acid amides and methyl esters are also readily hydrolyzed, but rates on arylamides are exceedingly low.. The enzyme catalyses Release of an N-terminal amino acid, preferentially leucine, but not glutamic or aspartic acids.. Functionally, presumably involved in the processing and regular turnover of intracellular proteins. Catalyzes the removal of unsubstituted N-terminal amino acids from various peptides. This is Probable cytosol aminopeptidase from Shewanella loihica (strain ATCC BAA-1088 / PV-4).